We begin with the raw amino-acid sequence, 2169 residues long: Vitellogenin-A1 (2169 aa).

An N-terminal signal peptide occupies residues M1–A46. N-linked (GlcNAc...) asparagine glycans are attached at residues N107 and N125. Residues W116–L1008 enclose the Vitellogenin domain. 2 positions are modified to sulfotyrosine: Y159 and Y163. N360, N391, and N435 each carry an N-linked (GlcNAc...) asparagine glycan. Disordered regions lie at residues D426–E481 and N514–E570. A compositionally biased stretch (low complexity) spans S438–S461. N-linked (GlcNAc...) asparagine glycosylation occurs at N514. Low complexity predominate over residues S517–S531. A glycan (N-linked (GlcNAc...) asparagine) is linked at N538. A compositionally biased stretch (low complexity) spans S541–E570. N587, N763, and N781 each carry an N-linked (GlcNAc...) asparagine glycan. Sulfotyrosine occurs at positions 1067, 1070, and 1074. N1140, N1233, and N1336 each carry an N-linked (GlcNAc...) asparagine glycan. A sulfotyrosine mark is found at Y1563, Y1564, and Y1570. N-linked (GlcNAc...) asparagine glycans are attached at residues N1652 and N1696. Sulfotyrosine is present on residues Y1737, Y1806, Y1809, Y1822, Y1824, and Y1888. The region spanning P1770–T1979 is the VWFD domain. Cystine bridges form between C1772/C1942 and C1794/C1978. The N-linked (GlcNAc...) asparagine glycan is linked to N1977. The segment covering E2026–S2063 has biased composition (low complexity). Positions E2026–C2081 are disordered. Positions E2064–K2079 are enriched in basic and acidic residues.

Glycosylated, phosphorylated and sulfated. The large subunit is sulfated more extensively than the small one. Produced by the fat body, where it is cleaved in the rough endoplasmic reticulum or cis-Golgi before being secreted into hemolymph. It is then sequestered by a single class of receptor mediated endocytosis in the ovary.

In terms of biological role, precursor of the egg-yolk proteins that are sources of nutrients during embryonic development. May supply aromatic amino acids to the cuticle of rapidly developing embryos. The sequence is that of Vitellogenin-A1 (VGA1) from Aedes aegypti (Yellowfever mosquito).